Consider the following 204-residue polypeptide: MIILDNSIQTKSKAYSISKLITINTLGPEGTSSEYAAKNFITNFTLLQGVNSKLSLHDTFESCIEKTLQSPLEYTIVPHAYDGIKHFYMRPDLQLLQIFRCDTPMYGLAVRPDFEYTDDMLDKAVIVSHPSPINLIKYFTRKDVTFDLVNSTSAAAKRVKDGLSDIALTNELARQKYGLQFVKTFKSIPMSWSLFGKGEIHDEN.

This sequence belongs to the prephenate decarboxylase family.

It localises to the cytoplasm. It carries out the reaction prephenate + H(+) = 3-[(4R)-4-hydroxycyclohexa-1,5-dien-1-yl]-2-oxopropanoate + CO2. It functions in the pathway antibiotic biosynthesis; bacilysin biosynthesis. Functionally, part of the bacABCDEF operon responsible for the biosynthesis of the nonribosomally synthesized dipeptide antibiotic bacilysin, composed of L-alanine and L-anticapsin. Bacilysin is an irreversible inactivator of the glutaminase domain of glucosamine synthetase. BacA is an unusual prephenate decarboxylase that avoids the typical aromatization of the cyclohexadienol ring of prephenate. BacA catalyzes the protonation of prephenate (1-carboxy-4-hydroxy-alpha-oxo-2,5-cyclohexadiene-1-propanoic acid) at C6 position, followed by a decarboxylation to produce the endocyclic-delta(4),delta(8)-7R-dihydro-hydroxyphenylpyruvate (en-H2HPP). En-H2HPP is able to undergo a slow nonenzymatic isomerization to produce the exocyclic-delta(3),delta(5)-dihydro-hydroxyphenylpyruvate (ex-H2HPP). BacA isomerizes only the pro-R double bond in prephenate. The protein is Prephenate decarboxylase of Bacillus amyloliquefaciens (Bacillus velezensis).